Consider the following 341-residue polypeptide: UDP-glucose 4-epimerase (341 aa).

The protein belongs to the polysaccharide synthase family.

The catalysed reaction is UDP-alpha-D-glucose = UDP-alpha-D-galactose. Functionally, epimerizes UDP-galactose to UDP-glucose. May contribute to formation of LPS or the exopolysaccharide slime layer by providing UDP-galactose as a substrate for either molecule. In Rickettsia prowazekii (strain Madrid E), this protein is UDP-glucose 4-epimerase (capD).